Here is a 327-residue protein sequence, read N- to C-terminus: DNA-directed RNA polymerase subunit alpha (327 aa).

The segment at 1–243 (MEKFLKYEIK…EHLNPIVNVN (243 aa)) is alpha N-terminal domain (alpha-NTD). The segment at 260–327 (RVRSFAKQIE…VHELGLKLRS (68 aa)) is alpha C-terminal domain (alpha-CTD).

Belongs to the RNA polymerase alpha chain family. Homodimer. The RNAP catalytic core consists of 2 alpha, 1 beta, 1 beta' and 1 omega subunit. When a sigma factor is associated with the core the holoenzyme is formed, which can initiate transcription.

It catalyses the reaction RNA(n) + a ribonucleoside 5'-triphosphate = RNA(n+1) + diphosphate. In terms of biological role, DNA-dependent RNA polymerase catalyzes the transcription of DNA into RNA using the four ribonucleoside triphosphates as substrates. This Mycoplasma pneumoniae (strain ATCC 29342 / M129 / Subtype 1) (Mycoplasmoides pneumoniae) protein is DNA-directed RNA polymerase subunit alpha.